Here is a 289-residue protein sequence, read N- to C-terminus: ATP synthase mitochondrial F1 complex assembly factor 2 (289 aa).

The transit peptide at 1–40 directs the protein to the mitochondrion; that stretch reads MWRSCLRLRDGGRRLLNRPAGGPSASMSPGPTIPSPARAY. The disordered stretch occupies residues 13 to 40; the sequence is RRLLNRPAGGPSASMSPGPTIPSPARAY. At Lys133 the chain carries N6-succinyllysine.

Belongs to the ATP12 family. As to quaternary structure, interacts with ATP5F1B; involved in the assembly of the F1 component of the mitochondrial ATP synthase (ATPase). Interacts with FMC1. In terms of tissue distribution, widely expressed.

The protein resides in the mitochondrion inner membrane. In terms of biological role, plays a role in the assembly of the F1 component of the mitochondrial ATP synthase (ATPase). This chain is ATP synthase mitochondrial F1 complex assembly factor 2, found in Homo sapiens (Human).